Here is a 158-residue protein sequence, read N- to C-terminus: Arginine repressor (158 aa).

This sequence belongs to the ArgR family.

It localises to the cytoplasm. The protein operates within amino-acid biosynthesis; L-arginine biosynthesis [regulation]. Functionally, regulates arginine biosynthesis genes. This is Arginine repressor from Anaeromyxobacter sp. (strain Fw109-5).